Reading from the N-terminus, the 114-residue chain is Class I hydrophobin SC16 (114 aa).

The signal sequence occupies residues 1–17 (MRFFATLVLALPALAMA). Cystine bridges form between Cys-33–Cys-93, Cys-40–Cys-87, Cys-41–Cys-74, and Cys-94–Cys-107. Asn-42 carries an N-linked (GlcNAc...) asparagine glycan.

Belongs to the fungal hydrophobin family. In terms of assembly, self-assembles to form functional amyloid fibrils called rodlets. Self-assembly into fibrillar rodlets occurs spontaneously at hydrophobic:hydrophilic interfaces and the rodlets further associate laterally to form amphipathic monolayers.

Its subcellular location is the secreted. It is found in the cell wall. Functionally, aerial growth, conidiation, and dispersal of filamentous fungi in the environment rely upon a capability of their secreting small amphipathic proteins called hydrophobins (HPBs) with low sequence identity. Class I can self-assemble into an outermost layer of rodlet bundles on aerial cell surfaces, conferring cellular hydrophobicity that supports fungal growth, development and dispersal; whereas Class II form highly ordered films at water-air interfaces through intermolecular interactions but contribute nothing to the rodlet structure. The polypeptide is Class I hydrophobin SC16 (Schizophyllum commune (strain H4-8 / FGSC 9210) (Split gill fungus)).